The chain runs to 120 residues: Photosystem II extrinsic protein U (120 aa).

Positions 1–29 (MKRLLSLLTGVLVMTGLLMALIFPQSAYA) are cleaved as a signal peptide.

Belongs to the PsbU family. In terms of assembly, PSII is composed of 1 copy each of membrane proteins PsbA, PsbB, PsbC, PsbD, PsbE, PsbF, PsbH, PsbI, PsbJ, PsbK, PsbL, PsbM, PsbT, PsbX, PsbY, Psb30/Ycf12, peripheral proteins PsbO, CyanoQ (PsbQ), PsbU, PsbV and a large number of cofactors. It forms dimeric complexes.

The protein resides in the cellular thylakoid membrane. One of the extrinsic, lumenal subunits of photosystem II (PSII). PSII is a light-driven water plastoquinone oxidoreductase, using light energy to abstract electrons from H(2)O, generating a proton gradient subsequently used for ATP formation. The extrinsic proteins stabilize the structure of photosystem II oxygen-evolving complex (OEC), the ion environment of oxygen evolution and protect the OEC against heat-induced inactivation. The sequence is that of Photosystem II extrinsic protein U from Prochlorococcus marinus (strain MIT 9303).